A 225-amino-acid chain; its full sequence is Ribonuclease 3 (225 aa).

An RNase III domain is found at 7-129 (IPRLCRTLGY…IIGAIYLDSE (123 aa)). Glu-42 is a Mg(2+) binding site. Asp-46 is a catalytic residue. Mg(2+) contacts are provided by Asp-115 and Glu-118. The active site involves Glu-118. One can recognise a DRBM domain in the interval 155–225 (DPKTLLQEHL…AAQVLELMKK (71 aa)).

This sequence belongs to the ribonuclease III family. Homodimer. Mg(2+) serves as cofactor.

Its subcellular location is the cytoplasm. The catalysed reaction is Endonucleolytic cleavage to 5'-phosphomonoester.. Its function is as follows. Digests double-stranded RNA. Involved in the processing of primary rRNA transcript to yield the immediate precursors to the large and small rRNAs (23S and 16S). Processes some mRNAs, and tRNAs when they are encoded in the rRNA operon. Processes pre-crRNA and tracrRNA of type II CRISPR loci if present in the organism. The protein is Ribonuclease 3 of Shewanella halifaxensis (strain HAW-EB4).